Here is a 254-residue protein sequence, read N- to C-terminus: GPI alpha-1,4-mannosyltransferase I, stabilizing subunit (254 aa).

The signal sequence occupies residues 1-22 (MAAGAVAWLLLWAAWLVGRLAA). The Lumenal portion of the chain corresponds to 23 to 226 (DFSDAPFSAG…PVGLTIHTSL (204 aa)). Asn211 is a glycosylation site (N-linked (GlcNAc...) asparagine). The chain crosses the membrane as a helical span at residues 227 to 247 (VCSVTLLITILCSTLILLAVF). At 248–254 (KYGHFSL) the chain is on the cytoplasmic side.

This sequence belongs to the PIGX family. In terms of assembly, part of the glycosylphosphatidylinositol-mannosyltransferase I complex that is composed of PIGM and PIGX. Interacts with PIGM; PIGX stabilizes PIGM.

It localises to the endoplasmic reticulum membrane. Its pathway is glycolipid biosynthesis; glycosylphosphatidylinositol-anchor biosynthesis. Stabilizing subunit of the glycosylphosphatidylinositol-mannosyltransferase I complex which catalyzes the transfer of the first mannose, via an alpha-1,4 bond from a dolichol-phosphate-mannose (Dol-P-Man) to the glucosaminyl acyl phosphatidylinositol (GlcN-(acyl)PI) intermediate to generate alpha-D-Man-(1-&gt;4)-alpha-D-GlcN-(1-&gt;6)-(1-radyl,2-acyl-sn-glycero-3-phospho)-2-acyl-inositol and participates in the sixth step of the glycosylphosphatidylinositol-anchor biosynthesis. Probably acts by stabilizing the mannosyltransferase PIGM. This is GPI alpha-1,4-mannosyltransferase I, stabilizing subunit from Mus musculus (Mouse).